The chain runs to 132 residues: DNA-directed RNA polymerase subunit omega (132 aa).

Belongs to the RNA polymerase subunit omega family. The RNAP catalytic core consists of 2 alpha, 1 beta, 1 beta' and 1 omega subunit. When a sigma factor is associated with the core the holoenzyme is formed, which can initiate transcription.

The catalysed reaction is RNA(n) + a ribonucleoside 5'-triphosphate = RNA(n+1) + diphosphate. Promotes RNA polymerase assembly. Latches the N- and C-terminal regions of the beta' subunit thereby facilitating its interaction with the beta and alpha subunits. The protein is DNA-directed RNA polymerase subunit omega of Bartonella quintana (strain Toulouse) (Rochalimaea quintana).